Reading from the N-terminus, the 490-residue chain is Protein U94 (490 aa).

Residues Met-1 to Lys-210 enclose the PV NS1-Nuc domain. An SF3 helicase domain is found at Asp-312 to Lys-463. Gly-338–Ser-345 is a binding site for ATP.

The protein localises to the host nucleus. This Human herpesvirus 6B (HHV-6 variant B) protein is Protein U94 (U94).